A 209-amino-acid chain; its full sequence is Holliday junction branch migration complex subunit RuvA (209 aa).

Residues 1–64 (MIGRIRGMLI…EDAQSLYGFA (64 aa)) are domain I. The segment at 65–143 (SRLDRNLFRL…QLEGQFVPSQ (79 aa)) is domain II. Residues 144-157 (PDVPTGAGAATASQ) are flexible linker. A domain III region spans residues 158-209 (AGPDPREEAEAALIALGYKPQEAAKAISKVAGPDMNSETLIRLALKNMIPAG).

Belongs to the RuvA family. As to quaternary structure, homotetramer. Forms an RuvA(8)-RuvB(12)-Holliday junction (HJ) complex. HJ DNA is sandwiched between 2 RuvA tetramers; dsDNA enters through RuvA and exits via RuvB. An RuvB hexamer assembles on each DNA strand where it exits the tetramer. Each RuvB hexamer is contacted by two RuvA subunits (via domain III) on 2 adjacent RuvB subunits; this complex drives branch migration. In the full resolvosome a probable DNA-RuvA(4)-RuvB(12)-RuvC(2) complex forms which resolves the HJ.

It localises to the cytoplasm. In terms of biological role, the RuvA-RuvB-RuvC complex processes Holliday junction (HJ) DNA during genetic recombination and DNA repair, while the RuvA-RuvB complex plays an important role in the rescue of blocked DNA replication forks via replication fork reversal (RFR). RuvA specifically binds to HJ cruciform DNA, conferring on it an open structure. The RuvB hexamer acts as an ATP-dependent pump, pulling dsDNA into and through the RuvAB complex. HJ branch migration allows RuvC to scan DNA until it finds its consensus sequence, where it cleaves and resolves the cruciform DNA. The polypeptide is Holliday junction branch migration complex subunit RuvA (Marinobacter nauticus (strain ATCC 700491 / DSM 11845 / VT8) (Marinobacter aquaeolei)).